The primary structure comprises 195 residues: 7-methyl-GTP pyrophosphatase (195 aa).

D70 serves as the catalytic Proton acceptor.

The protein belongs to the Maf family. YceF subfamily. Requires a divalent metal cation as cofactor.

Its subcellular location is the cytoplasm. It carries out the reaction N(7)-methyl-GTP + H2O = N(7)-methyl-GMP + diphosphate + H(+). In terms of biological role, nucleoside triphosphate pyrophosphatase that hydrolyzes 7-methyl-GTP (m(7)GTP). May have a dual role in cell division arrest and in preventing the incorporation of modified nucleotides into cellular nucleic acids. This chain is 7-methyl-GTP pyrophosphatase, found in Shewanella sp. (strain MR-7).